The following is a 575-amino-acid chain: Arginine--tRNA ligase (575 aa).

The 'HIGH' region motif lies at A131–H141.

It belongs to the class-I aminoacyl-tRNA synthetase family.

The protein localises to the cytoplasm. It carries out the reaction tRNA(Arg) + L-arginine + ATP = L-arginyl-tRNA(Arg) + AMP + diphosphate. The protein is Arginine--tRNA ligase of Methanobrevibacter smithii (strain ATCC 35061 / DSM 861 / OCM 144 / PS).